Consider the following 126-residue polypeptide: Glycine cleavage system H protein (126 aa).

In terms of domain architecture, Lipoyl-binding spans V22–E104. At K63 the chain carries N6-lipoyllysine.

The protein belongs to the GcvH family. In terms of assembly, the glycine cleavage system is composed of four proteins: P, T, L and H. (R)-lipoate is required as a cofactor.

The glycine cleavage system catalyzes the degradation of glycine. The H protein shuttles the methylamine group of glycine from the P protein to the T protein. In terms of biological role, is also involved in protein lipoylation via its role as an octanoyl/lipoyl carrier protein intermediate. The chain is Glycine cleavage system H protein from Staphylococcus epidermidis (strain ATCC 12228 / FDA PCI 1200).